An 831-amino-acid polypeptide reads, in one-letter code: Probable glucan 1,3-beta-glucosidase D (831 aa).

Basic and acidic residues-rich tracts occupy residues 1-24, 44-56, 79-93, 102-115, 137-151, and 198-213; these read MPSH…YREV, RRDD…RSHE, RSHD…RSRA, SRRD…EYRR, RDGQ…DREA, and QRER…LESK. Disordered stretches follow at residues 1–179 and 192–241; these read MPSH…SGSH and HYDE…GQSK. The Cytoplasmic portion of the chain corresponds to 1–297; it reads MPSHSRSRDR…AQPPFWKRKK (297 aa). Residues 298–318 form a helical; Signal-anchor for type II membrane protein membrane-spanning segment; that stretch reads WWIVIGVLVVVLAIVIPVAVV. The Extracellular segment spans residues 319 to 831; that stretch reads MSKKHGHDDD…PSFGDLPEYY (513 aa). 7 N-linked (GlcNAc...) asparagine glycosylation sites follow: Asn-376, Asn-381, Asn-393, Asn-410, Asn-442, Asn-546, and Asn-558. The active-site Proton donor is Glu-597. N-linked (GlcNAc...) asparagine glycosylation is found at Asn-610, Asn-636, Asn-669, and Asn-689. Glu-702 (nucleophile) is an active-site residue.

Belongs to the glycosyl hydrolase 5 (cellulase A) family.

It localises to the cell membrane. The enzyme catalyses Successive hydrolysis of beta-D-glucose units from the non-reducing ends of (1-&gt;3)-beta-D-glucans, releasing alpha-glucose.. Glucosidase involved in the degradation of cellulosic biomass. Active on lichenan. The protein is Probable glucan 1,3-beta-glucosidase D (exgD) of Aspergillus flavus (strain ATCC 200026 / FGSC A1120 / IAM 13836 / NRRL 3357 / JCM 12722 / SRRC 167).